We begin with the raw amino-acid sequence, 270 residues long: Tryptophan synthase alpha chain (270 aa).

Active-site proton acceptor residues include Glu57 and Asp68.

The protein belongs to the TrpA family. In terms of assembly, tetramer of two alpha and two beta chains.

The enzyme catalyses (1S,2R)-1-C-(indol-3-yl)glycerol 3-phosphate + L-serine = D-glyceraldehyde 3-phosphate + L-tryptophan + H2O. Its pathway is amino-acid biosynthesis; L-tryptophan biosynthesis; L-tryptophan from chorismate: step 5/5. In terms of biological role, the alpha subunit is responsible for the aldol cleavage of indoleglycerol phosphate to indole and glyceraldehyde 3-phosphate. The sequence is that of Tryptophan synthase alpha chain from Mycobacterium leprae (strain Br4923).